Here is a 164-residue protein sequence, read N- to C-terminus: ATP synthase subunit b (164 aa).

A helical transmembrane segment spans residues 7–25; that stretch reads SFWLAVSFIIFVYLIYRPA.

It belongs to the ATPase B chain family. F-type ATPases have 2 components, F(1) - the catalytic core - and F(0) - the membrane proton channel. F(1) has five subunits: alpha(3), beta(3), gamma(1), delta(1), epsilon(1). F(0) has three main subunits: a(1), b(2) and c(10-14). The alpha and beta chains form an alternating ring which encloses part of the gamma chain. F(1) is attached to F(0) by a central stalk formed by the gamma and epsilon chains, while a peripheral stalk is formed by the delta and b chains.

The protein localises to the cell inner membrane. Its function is as follows. F(1)F(0) ATP synthase produces ATP from ADP in the presence of a proton or sodium gradient. F-type ATPases consist of two structural domains, F(1) containing the extramembraneous catalytic core and F(0) containing the membrane proton channel, linked together by a central stalk and a peripheral stalk. During catalysis, ATP synthesis in the catalytic domain of F(1) is coupled via a rotary mechanism of the central stalk subunits to proton translocation. Component of the F(0) channel, it forms part of the peripheral stalk, linking F(1) to F(0). This chain is ATP synthase subunit b, found in Rickettsia felis (strain ATCC VR-1525 / URRWXCal2) (Rickettsia azadi).